A 948-amino-acid polypeptide reads, in one-letter code: RNA polymerase-associated protein RapA (948 aa).

One can recognise a Helicase ATP-binding domain in the interval 164–332 (EVADRIAPRV…FARLRLLDPN (169 aa)). 177–184 (DEVGLGKT) contributes to the ATP binding site. Residues 278 to 281 (DEAH) carry the DEAH box motif. A Helicase C-terminal domain is found at 473 to 627 (RVEWLIDTLK…TCPTGNALQH (155 aa)).

Belongs to the SNF2/RAD54 helicase family. RapA subfamily. In terms of assembly, interacts with the RNAP. Has a higher affinity for the core RNAP than for the holoenzyme. Its ATPase activity is stimulated by binding to RNAP.

Functionally, transcription regulator that activates transcription by stimulating RNA polymerase (RNAP) recycling in case of stress conditions such as supercoiled DNA or high salt concentrations. Probably acts by releasing the RNAP, when it is trapped or immobilized on tightly supercoiled DNA. Does not activate transcription on linear DNA. Probably not involved in DNA repair. The protein is RNA polymerase-associated protein RapA of Pseudomonas syringae pv. tomato (strain ATCC BAA-871 / DC3000).